Reading from the N-terminus, the 521-residue chain is Spermidine transporter DUR31 (521 aa).

Residues 11-31 form a helical membrane-spanning segment; that stretch reads AIIYLSYAFMLATGLFLAWKF. The N-linked (GlcNAc...) asparagine glycan is linked to N41. The next 12 membrane-spanning stretches (helical) occupy residues 47-67, 79-99, 117-137, 156-176, 187-207, 227-247, 264-284, 310-330, 354-374, 377-397, 406-426, and 453-473; these read IPLALNFVASAMGVGIITTYA, LVYTICGAIPIVGFAVVGPVI, FGMVTALYLSAFTCLTMFLFM, ALGAVIVECVVTTIYTFFGGF, GVCVLLLLIICAAGMGSYIEI, LVYILFVAIVTNDCFMSGFWL, IAAFVTFAICTLIGTTGFLAV, WLVAFVLIFCIVLSTCTFDSL, IMLILIMVPIVVLAVKVADNI, IYLIADLVSAAIIPSVFLGLA, GFDVMAGGLGALLGVFIFGTV, and FGAFVIAPVGGVIITLASAAL.

It belongs to the sodium:solute symporter (SSF) (TC 2.A.21) family.

Its subcellular location is the membrane. It carries out the reaction spermidine(in) = spermidine(out). In terms of biological role, spermidine transporter that is also used by salivary gland-secreted histatin 5 (Hst 5) to enter into candidal cells. A major component of host nonimmune defense systems is salivary histatins, a family of small (3-4 kDa), histidine-rich, cationic proteins secreted by major salivary glands in humans and higher primates. Hst 5 is the most potent of the 12 histatin family members and has fungicidal activity against blastoconidial and filamentous forms of Candida albicans. DUR31 only functions under high concentrations of Hst 5. Hst 5 cojugates to spermidine to be uptaken by DUR31. The sequence is that of Spermidine transporter DUR31 from Candida albicans (strain SC5314 / ATCC MYA-2876) (Yeast).